A 77-amino-acid polypeptide reads, in one-letter code: RNA-binding protein Hfq (77 aa).

The region spanning 9 to 68 is the Sm domain; that stretch reads DPFLNALRKEHIPVAIYLVNGIKLQGQIESFDQFVILLKNTVSQMVYKHAISTVVPARAI.

The protein belongs to the Hfq family. In terms of assembly, homohexamer.

In terms of biological role, RNA chaperone that binds small regulatory RNA (sRNAs) and mRNAs to facilitate mRNA translational regulation in response to envelope stress, environmental stress and changes in metabolite concentrations. Also binds with high specificity to tRNAs. The chain is RNA-binding protein Hfq from Psychromonas ingrahamii (strain DSM 17664 / CCUG 51855 / 37).